A 151-amino-acid polypeptide reads, in one-letter code: D-ribose pyranase 1 (151 aa).

Catalysis depends on His-20, which acts as the Proton donor. Substrate-binding positions include Asp-28, His-98, and 121-123 (WGN).

The protein belongs to the RbsD / FucU family. RbsD subfamily. Homodecamer.

The protein resides in the cytoplasm. It catalyses the reaction beta-D-ribopyranose = beta-D-ribofuranose. It participates in carbohydrate metabolism; D-ribose degradation; D-ribose 5-phosphate from beta-D-ribopyranose: step 1/2. Functionally, catalyzes the interconversion of beta-pyran and beta-furan forms of D-ribose. In Streptomyces griseus subsp. griseus (strain JCM 4626 / CBS 651.72 / NBRC 13350 / KCC S-0626 / ISP 5235), this protein is D-ribose pyranase 1.